Reading from the N-terminus, the 874-residue chain is Leucine--tRNA ligase (874 aa).

Positions 47–57 (PYPSGKLHMGH) match the 'HIGH' region motif. A 'KMSKS' region motif is present at residues 636-640 (KMSKS). Lys639 is a binding site for ATP.

Belongs to the class-I aminoacyl-tRNA synthetase family.

It localises to the cytoplasm. It catalyses the reaction tRNA(Leu) + L-leucine + ATP = L-leucyl-tRNA(Leu) + AMP + diphosphate. This Acinetobacter baumannii (strain AB307-0294) protein is Leucine--tRNA ligase.